We begin with the raw amino-acid sequence, 77 residues long: Acyl carrier protein (77 aa).

Positions 1 to 76 constitute a Carrier domain; sequence MSLEDDVKSI…DVITYIKTRQ (76 aa). O-(pantetheine 4'-phosphoryl)serine is present on serine 36.

This sequence belongs to the acyl carrier protein (ACP) family. 4'-phosphopantetheine is transferred from CoA to a specific serine of apo-ACP by AcpS. This modification is essential for activity because fatty acids are bound in thioester linkage to the sulfhydryl of the prosthetic group.

Its subcellular location is the cytoplasm. Its pathway is lipid metabolism; fatty acid biosynthesis. Its function is as follows. Carrier of the growing fatty acid chain in fatty acid biosynthesis. This Chlamydia caviae (strain ATCC VR-813 / DSM 19441 / 03DC25 / GPIC) (Chlamydophila caviae) protein is Acyl carrier protein.